A 60-amino-acid chain; its full sequence is Short neurotoxin C (60 aa).

4 disulfide bridges follow: Cys-3–Cys-22, Cys-17–Cys-39, Cys-41–Cys-52, and Cys-53–Cys-58.

The protein belongs to the three-finger toxin family. Short-chain subfamily. Type I alpha-neurotoxin sub-subfamily. As to expression, expressed by the venom gland.

It is found in the secreted. Binds to muscle nicotinic acetylcholine receptor (nAChR) and inhibit acetylcholine from binding to the receptor, thereby impairing neuromuscular transmission. In Aipysurus laevis (Olive sea snake), this protein is Short neurotoxin C.